The following is a 338-amino-acid chain: Anthranilate phosphoribosyltransferase (338 aa).

5-phospho-alpha-D-ribose 1-diphosphate contacts are provided by residues Gly78, 81–82 (GD), Ser86, 88–91 (NIST), 106–114 (KHGNRSITS), and Ser118. Residue Gly78 coordinates anthranilate. A Mg(2+)-binding site is contributed by Ser90. Residue Asn109 participates in anthranilate binding. Arg163 is an anthranilate binding site. Residues Asp222 and Glu223 each contribute to the Mg(2+) site.

This sequence belongs to the anthranilate phosphoribosyltransferase family. In terms of assembly, homodimer. The cofactor is Mg(2+).

The catalysed reaction is N-(5-phospho-beta-D-ribosyl)anthranilate + diphosphate = 5-phospho-alpha-D-ribose 1-diphosphate + anthranilate. It participates in amino-acid biosynthesis; L-tryptophan biosynthesis; L-tryptophan from chorismate: step 2/5. Its function is as follows. Catalyzes the transfer of the phosphoribosyl group of 5-phosphorylribose-1-pyrophosphate (PRPP) to anthranilate to yield N-(5'-phosphoribosyl)-anthranilate (PRA). The sequence is that of Anthranilate phosphoribosyltransferase from Staphylococcus haemolyticus (strain JCSC1435).